Here is a 186-residue protein sequence, read N- to C-terminus: Translation initiation factor IF-3 (186 aa).

The protein belongs to the IF-3 family. Monomer.

It is found in the cytoplasm. Its function is as follows. IF-3 binds to the 30S ribosomal subunit and shifts the equilibrium between 70S ribosomes and their 50S and 30S subunits in favor of the free subunits, thus enhancing the availability of 30S subunits on which protein synthesis initiation begins. This chain is Translation initiation factor IF-3, found in Chlamydia muridarum (strain MoPn / Nigg).